The following is a 365-amino-acid chain: Class E basic helix-loop-helix protein 22 (365 aa).

Disordered stretches follow at residues Ala34 to Gly93, Gly134 to Cys156, and His188 to Lys225. Residues Gly82 to Gly93 show a composition bias toward gly residues. Gly residues predominate over residues Gly191 to Ser216. The bHLH domain maps to Ala226–Gln280.

Heterodimer with other bHLH proteins, like TCF3/E47. In terms of tissue distribution, kidney, lung, brain and pancreas (insulinoma).

The protein localises to the nucleus. In terms of biological role, inhibits DNA binding of TCF3/E47 homodimers and TCF3 (E47)/NEUROD1 heterodimers and acts as a strong repressor of Neurod1 and Myod-responsive genes, probably by heterodimerization with class a basic helix-loop-helix factors. Despite the presence of an intact basic domain, does not bind to DNA. In Mesocricetus auratus (Golden hamster), this protein is Class E basic helix-loop-helix protein 22 (BHLHE22).